Reading from the N-terminus, the 217-residue chain is Homeobox protein Hox-B7 (217 aa).

The Antp-type hexapeptide motif lies at 126 to 131 (IYPWMR). Residues 137–196 (RKRGRQTYTRYQTLELEKEFHYNRYLTRRRRIEIAHTLCLTERQIKIWFQNRRMKWKKEN) constitute a DNA-binding region (homeobox). The disordered stretch occupies residues 192-217 (WKKENKTSGPGTTGQDKAEAEEEEEE).

This sequence belongs to the Antp homeobox family. In terms of assembly, forms a DNA-binding heterodimer with transcription factor PBX1.

The protein resides in the nucleus. Its function is as follows. Sequence-specific transcription factor which is part of a developmental regulatory system that provides cells with specific positional identities on the anterior-posterior axis. The polypeptide is Homeobox protein Hox-B7 (Hoxb7) (Mus musculus (Mouse)).